The primary structure comprises 126 residues: MSNVPAELKYTDEHEWIRTEADGTLTVGITDHAQSTLGDIVFLELPEVGKSVNAGDAVGVVESVKAASDIYSPVSGEIVAINEAATDAPEEVNGDAYGVWLFKIKLAAGASTDKLIDADAYSKLID.

In terms of domain architecture, Lipoyl-binding spans 24–105; sequence TLTVGITDHA…AYGVWLFKIK (82 aa). Residue Lys65 is modified to N6-lipoyllysine.

The protein belongs to the GcvH family. As to quaternary structure, the glycine cleavage system is composed of four proteins: P, T, L and H. It depends on (R)-lipoate as a cofactor.

In terms of biological role, the glycine cleavage system catalyzes the degradation of glycine. The H protein shuttles the methylamine group of glycine from the P protein to the T protein. This is Glycine cleavage system H protein from Burkholderia cenocepacia (strain ATCC BAA-245 / DSM 16553 / LMG 16656 / NCTC 13227 / J2315 / CF5610) (Burkholderia cepacia (strain J2315)).